Consider the following 201-residue polypeptide: ATP-dependent Clp protease proteolytic subunit (201 aa).

Catalysis depends on serine 98, which acts as the Nucleophile. Residue histidine 123 is part of the active site.

It belongs to the peptidase S14 family. In terms of assembly, fourteen ClpP subunits assemble into 2 heptameric rings which stack back to back to give a disk-like structure with a central cavity, resembling the structure of eukaryotic proteasomes.

It localises to the cytoplasm. The catalysed reaction is Hydrolysis of proteins to small peptides in the presence of ATP and magnesium. alpha-casein is the usual test substrate. In the absence of ATP, only oligopeptides shorter than five residues are hydrolyzed (such as succinyl-Leu-Tyr-|-NHMec, and Leu-Tyr-Leu-|-Tyr-Trp, in which cleavage of the -Tyr-|-Leu- and -Tyr-|-Trp bonds also occurs).. Its function is as follows. Cleaves peptides in various proteins in a process that requires ATP hydrolysis. Has a chymotrypsin-like activity. Plays a major role in the degradation of misfolded proteins. In Desulfatibacillum aliphaticivorans, this protein is ATP-dependent Clp protease proteolytic subunit.